Reading from the N-terminus, the 236-residue chain is Phosphoribosylaminoimidazole-succinocarboxamide synthase (236 aa).

It belongs to the SAICAR synthetase family.

The catalysed reaction is 5-amino-1-(5-phospho-D-ribosyl)imidazole-4-carboxylate + L-aspartate + ATP = (2S)-2-[5-amino-1-(5-phospho-beta-D-ribosyl)imidazole-4-carboxamido]succinate + ADP + phosphate + 2 H(+). It participates in purine metabolism; IMP biosynthesis via de novo pathway; 5-amino-1-(5-phospho-D-ribosyl)imidazole-4-carboxamide from 5-amino-1-(5-phospho-D-ribosyl)imidazole-4-carboxylate: step 1/2. In Campylobacter curvus (strain 525.92), this protein is Phosphoribosylaminoimidazole-succinocarboxamide synthase.